Here is a 991-residue protein sequence, read N- to C-terminus: UvrABC system protein A (991 aa).

Glycine 48–serine 55 contacts ATP. 2 ABC transporter domains span residues tryptophan 345–leucine 624 and asparagine 644–glutamate 972. Glycine 676 to serine 683 lines the ATP pocket. A C4-type zinc finger spans residues cysteine 775–cysteine 801.

This sequence belongs to the ABC transporter superfamily. UvrA family. In terms of assembly, forms a heterotetramer with UvrB during the search for lesions.

It localises to the cytoplasm. The UvrABC repair system catalyzes the recognition and processing of DNA lesions. UvrA is an ATPase and a DNA-binding protein. A damage recognition complex composed of 2 UvrA and 2 UvrB subunits scans DNA for abnormalities. When the presence of a lesion has been verified by UvrB, the UvrA molecules dissociate. The chain is UvrABC system protein A from Bradyrhizobium diazoefficiens (strain JCM 10833 / BCRC 13528 / IAM 13628 / NBRC 14792 / USDA 110).